The chain runs to 421 residues: CinA-like protein (421 aa).

It belongs to the CinA family.

This Myxococcus xanthus (strain DK1622) protein is CinA-like protein.